A 233-amino-acid chain; its full sequence is Nickel import system ATP-binding protein NikE (233 aa).

Residues 2–228 (IELKHVTFGY…DRHPYTKELV (227 aa)) form the ABC transporter domain. 35–42 (GESGCGKS) contacts ATP.

It belongs to the ABC transporter superfamily. In terms of assembly, the complex is composed of two ATP-binding proteins (NikD and NikE), two transmembrane proteins (NikB and NikC) and a solute-binding protein (NikA).

It localises to the cell membrane. It catalyses the reaction Ni(2+)(out) + ATP + H2O = Ni(2+)(in) + ADP + phosphate + H(+). Part of the ABC transporter complex NikABCDE (Opp2) involved in nickel import. Probably responsible for energy coupling to the transport system. This is Nickel import system ATP-binding protein NikE from Staphylococcus aureus (strain USA300).